Consider the following 691-residue polypeptide: Elongation factor G (691 aa).

Residues 8–282 (ERVRNIGIAA…AVIDYLPAPV (275 aa)) form the tr-type G domain. Residues 17-24 (AHIDAGKT), 81-85 (DTPGH), and 135-138 (NKMD) contribute to the GTP site.

This sequence belongs to the TRAFAC class translation factor GTPase superfamily. Classic translation factor GTPase family. EF-G/EF-2 subfamily.

It localises to the cytoplasm. Catalyzes the GTP-dependent ribosomal translocation step during translation elongation. During this step, the ribosome changes from the pre-translocational (PRE) to the post-translocational (POST) state as the newly formed A-site-bound peptidyl-tRNA and P-site-bound deacylated tRNA move to the P and E sites, respectively. Catalyzes the coordinated movement of the two tRNA molecules, the mRNA and conformational changes in the ribosome. The protein is Elongation factor G of Synechococcus sp. (strain CC9605).